Reading from the N-terminus, the 497-residue chain is Cobyric acid synthase (497 aa).

Positions 251 to 443 constitute a GATase cobBQ-type domain; it reads DLKIGVVWYP…LHGLFDNDFF (193 aa). Cysteine 333 serves as the catalytic Nucleophile. Histidine 435 is a catalytic residue.

The protein belongs to the CobB/CobQ family. CobQ subfamily.

It participates in cofactor biosynthesis; adenosylcobalamin biosynthesis. Functionally, catalyzes amidations at positions B, D, E, and G on adenosylcobyrinic A,C-diamide. NH(2) groups are provided by glutamine, and one molecule of ATP is hydrogenolyzed for each amidation. This Carboxydothermus hydrogenoformans (strain ATCC BAA-161 / DSM 6008 / Z-2901) protein is Cobyric acid synthase.